The chain runs to 224 residues: Beta-casein (224 aa).

The signal sequence occupies residues 1 to 15; sequence MKVLILACLVALALA. Ser30, Ser32, Ser33, and Ser34 each carry phosphoserine.

It belongs to the beta-casein family. Mammary gland specific. Secreted in milk.

Its subcellular location is the secreted. Important role in determination of the surface properties of the casein micelles. In Bubalus bubalis (Domestic water buffalo), this protein is Beta-casein (CSN2).